The chain runs to 288 residues: Small ribosomal subunit protein uS2 (288 aa).

The protein belongs to the universal ribosomal protein uS2 family. As to quaternary structure, component of the small ribosomal subunit. Mature ribosomes consist of a small (40S) and a large (60S) subunit. The 40S subunit contains about 33 different proteins and 1 molecule of RNA (18S). The 60S subunit contains about 49 different proteins and 3 molecules of RNA (28S, 5.8S and 5S). Interacts with ribosomal protein S21.

The protein resides in the cytoplasm. In terms of biological role, required for the assembly and/or stability of the 40S ribosomal subunit. Required for the processing of the 20S rRNA-precursor to mature 18S rRNA in a late step of the maturation of 40S ribosomal subunits. The protein is Small ribosomal subunit protein uS2 of Aedes aegypti (Yellowfever mosquito).